A 246-amino-acid chain; its full sequence is MGRAFEYRKATKLKRWGHMAKTFTRLGKQIAIAVKAGGPEPENNPTLRGVIATCKRENMPKDNIERAIKNAMGKDTSDYKGMTYEGYGPHGVAVFVDTLTDNTTRTVADVRSVFNKFGGNLGTTGSLAFLFDHKCVFTFKKKEGMDMEELILDLIDYNVEDEFDEDEEEGTITIYGDPKSYAAIQKHLEECGFEEVGGDFTYIPNDLKDVTPEQRETLDKMVERLEEFDDVQTVYTNMKPASEEEE.

This sequence belongs to the TACO1 family.

The protein resides in the cytoplasm. This is Probable transcriptional regulatory protein BVU_3469 from Phocaeicola vulgatus (strain ATCC 8482 / DSM 1447 / JCM 5826 / CCUG 4940 / NBRC 14291 / NCTC 11154) (Bacteroides vulgatus).